The primary structure comprises 134 residues: Small ribosomal subunit protein uS9 (134 aa).

The disordered stretch occupies residues 97–134; it reads ENRQDLKSCGFLTRDPRKKERKKYGHKKARKSFQFSKR. Residues 115–134 show a composition bias toward basic residues; it reads KERKKYGHKKARKSFQFSKR.

Belongs to the universal ribosomal protein uS9 family.

The chain is Small ribosomal subunit protein uS9 (rpsI) from Chlamydia pneumoniae (Chlamydophila pneumoniae).